Consider the following 441-residue polypeptide: Protein disulfide isomerase-like 2-3 (441 aa).

The first 18 residues, 1–18 (MRPAVAAALLLVAAAVAA), serve as a signal peptide directing secretion. Thioredoxin domains are found at residues 19-139 (SPVS…ALLR) and 159-276 (SEKT…ANAA). Catalysis depends on nucleophile residues C59 and C62. A disulfide bond links C59 and C62. Residues 143–166 (NGKTSAGSGGKKSGGSSEKTEPSA) are disordered. Catalysis depends on nucleophile residues C195 and C198. A disulfide bridge connects residues C195 and C198.

This sequence belongs to the protein disulfide isomerase family.

It localises to the endoplasmic reticulum lumen. The enzyme catalyses Catalyzes the rearrangement of -S-S- bonds in proteins.. Its function is as follows. Acts as a protein-folding catalyst that interacts with nascent polypeptides to catalyze the formation, isomerization, and reduction or oxidation of disulfide bonds. May play a role in storage protein biogenesis. The polypeptide is Protein disulfide isomerase-like 2-3 (PDIL2-3) (Oryza sativa subsp. japonica (Rice)).